A 184-amino-acid polypeptide reads, in one-letter code: Oligoribonuclease (184 aa).

Residues 8-169 (LIWIDLEMTG…EDIHESIIEL (162 aa)) enclose the Exonuclease domain. Tyrosine 129 is an active-site residue.

Belongs to the oligoribonuclease family.

The protein localises to the cytoplasm. Its function is as follows. 3'-to-5' exoribonuclease specific for small oligoribonucleotides. The polypeptide is Oligoribonuclease (Buchnera aphidicola subsp. Schizaphis graminum (strain Sg)).